A 677-amino-acid polypeptide reads, in one-letter code: Methionine--tRNA ligase (677 aa).

Residues 15–25 (PYANGSIHLGH) carry the 'HIGH' region motif. 4 residues coordinate Zn(2+): C146, C149, C159, and C162. The short motif at 333–337 (KMSKS) is the 'KMSKS' region element. K336 contacts ATP. Residues 575–677 (DFAKIDLRVA…DGAKPGQQVK (103 aa)) form the tRNA-binding domain.

It belongs to the class-I aminoacyl-tRNA synthetase family. MetG type 1 subfamily. As to quaternary structure, homodimer. Requires Zn(2+) as cofactor.

The protein resides in the cytoplasm. It carries out the reaction tRNA(Met) + L-methionine + ATP = L-methionyl-tRNA(Met) + AMP + diphosphate. Is required not only for elongation of protein synthesis but also for the initiation of all mRNA translation through initiator tRNA(fMet) aminoacylation. This chain is Methionine--tRNA ligase, found in Salmonella paratyphi B (strain ATCC BAA-1250 / SPB7).